Consider the following 222-residue polypeptide: MRIDIISVLPKIIESPFKHSILKRAQEKRLVEIYIHSLREYSTDKHHRVDDYPFGGGSGMVLQCEPIDRAISSLQLQRNYDEIIYTSPDGETFNQQIANDLSICYNLIILCGHYKGIDYRIREHLITREISIGDYVLTGGELAAVVICDTIVRLIPGVINDEQSALSDSFQDNLLAPPIYTRPSNYKGWIVPDILLSGHKAKIKDWELQQSIDRTKRLRPDL.

Residues glycine 112 and 132-137 (IGDYVL) contribute to the S-adenosyl-L-methionine site.

Belongs to the RNA methyltransferase TrmD family. In terms of assembly, homodimer.

The protein resides in the cytoplasm. The catalysed reaction is guanosine(37) in tRNA + S-adenosyl-L-methionine = N(1)-methylguanosine(37) in tRNA + S-adenosyl-L-homocysteine + H(+). Its function is as follows. Specifically methylates guanosine-37 in various tRNAs. In Azobacteroides pseudotrichonymphae genomovar. CFP2, this protein is tRNA (guanine-N(1)-)-methyltransferase.